The following is a 320-amino-acid chain: Ferrochelatase (320 aa).

Residues H194 and E272 each contribute to the Fe cation site.

This sequence belongs to the ferrochelatase family.

It is found in the cytoplasm. It catalyses the reaction heme b + 2 H(+) = protoporphyrin IX + Fe(2+). Its pathway is porphyrin-containing compound metabolism; protoheme biosynthesis; protoheme from protoporphyrin-IX: step 1/1. In terms of biological role, catalyzes the ferrous insertion into protoporphyrin IX. This Desulfotalea psychrophila (strain LSv54 / DSM 12343) protein is Ferrochelatase.